Consider the following 200-residue polypeptide: A-type ATP synthase subunit E 3 (200 aa).

This sequence belongs to the V-ATPase E subunit family. As to quaternary structure, has multiple subunits with at least A(3), B(3), C, D, E, F, H, I and proteolipid K(x).

It localises to the cell membrane. Functionally, component of the A-type ATP synthase that produces ATP from ADP in the presence of a proton gradient across the membrane. In Methanospirillum hungatei JF-1 (strain ATCC 27890 / DSM 864 / NBRC 100397 / JF-1), this protein is A-type ATP synthase subunit E 3.